A 461-amino-acid chain; its full sequence is Na(+)/H(+) antiporter NhaA (461 aa).

Residues 1-23 are disordered; sequence MILSTQRLGRFMSPAPTPAPDAK. Transmembrane regions (helical) follow at residues 48-68, 89-109, 127-147, 157-177, 186-206, 211-231, 236-256, 257-277, 305-325, 339-359, 374-394, and 408-428; these read VGGA…NSPV, LSLG…LVGL, IVPV…YAAV, GWAI…AIIG, IFLL…IAFF, IQAA…FLAQ, FFGA…IVTW, ALVH…GFAV, ISAG…AVGG, IGII…TTWI, WIDV…SLLV, and HAKV…TVVL.

It belongs to the NhaA Na(+)/H(+) (TC 2.A.33) antiporter family.

Its subcellular location is the cell membrane. The catalysed reaction is Na(+)(in) + 2 H(+)(out) = Na(+)(out) + 2 H(+)(in). In terms of biological role, na(+)/H(+) antiporter that extrudes sodium in exchange for external protons. The sequence is that of Na(+)/H(+) antiporter NhaA from Arthrobacter sp. (strain FB24).